A 99-amino-acid polypeptide reads, in one-letter code: MNITDVRVFPVEEDKLKAYVTITLDHCFVIRDLKVIHGSTGLFIAMPAKKRKDGTYKDIAHPLNADTRSQMERVILMEYERHLHQAQAGMLVAAPADLD.

It belongs to the SpoVG family.

Its function is as follows. Could be involved in septation. The sequence is that of Putative septation protein SpoVG from Myxococcus xanthus (strain DK1622).